Consider the following 168-residue polypeptide: uncharacterized protein (168 aa).

One can recognise an N-acetyltransferase domain in the interval 14 to 168 (IDIPLLDAAS…EYKHWIYVTK (155 aa)).

Belongs to the acetyltransferase family.

This is an uncharacterized protein from Bacillus subtilis (strain 168).